The sequence spans 212 residues: Ribonuclease HII (212 aa).

The region spanning 20–209 is the RNase H type-2 domain; that stretch reads TCVVGVDEVG…VHNILYQEAS (190 aa). Asp-26, Glu-27, and Asp-117 together coordinate a divalent metal cation.

Belongs to the RNase HII family. Requires Mn(2+) as cofactor. Mg(2+) is required as a cofactor.

The protein localises to the cytoplasm. The enzyme catalyses Endonucleolytic cleavage to 5'-phosphomonoester.. In terms of biological role, endonuclease that specifically degrades the RNA of RNA-DNA hybrids. The chain is Ribonuclease HII from Cereibacter sphaeroides (strain ATCC 17029 / ATH 2.4.9) (Rhodobacter sphaeroides).